The primary structure comprises 130 residues: Small ribosomal subunit protein uS8 (130 aa).

It belongs to the universal ribosomal protein uS8 family. Part of the 30S ribosomal subunit. Contacts proteins S5 and S12.

One of the primary rRNA binding proteins, it binds directly to 16S rRNA central domain where it helps coordinate assembly of the platform of the 30S subunit. This Shigella boydii serotype 18 (strain CDC 3083-94 / BS512) protein is Small ribosomal subunit protein uS8.